A 250-amino-acid chain; its full sequence is Urease accessory protein UreD (250 aa).

Belongs to the UreD family. In terms of assembly, ureD, UreF and UreG form a complex that acts as a GTP-hydrolysis-dependent molecular chaperone, activating the urease apoprotein by helping to assemble the nickel containing metallocenter of UreC. The UreE protein probably delivers the nickel.

Its subcellular location is the cytoplasm. Required for maturation of urease via the functional incorporation of the urease nickel metallocenter. The chain is Urease accessory protein UreD from Aliarcobacter butzleri (strain RM4018) (Arcobacter butzleri).